Reading from the N-terminus, the 223-residue chain is Cytidylate kinase (223 aa).

ATP is bound at residue 12–20 (GPSGVGKGT).

The protein belongs to the cytidylate kinase family. Type 1 subfamily.

It localises to the cytoplasm. The enzyme catalyses CMP + ATP = CDP + ADP. It catalyses the reaction dCMP + ATP = dCDP + ADP. The polypeptide is Cytidylate kinase (Xylella fastidiosa (strain M12)).